A 362-amino-acid chain; its full sequence is Atypical chemokine receptor 3 (362 aa).

The Extracellular segment spans residues 1 to 47 (MDVHLFDYVEPGNYSDINWPCNSSDCIVVDTVQCPAMPNKNVLLYTL). Asparagine 13 and asparagine 22 each carry an N-linked (GlcNAc...) asparagine glycan. Residues 48-68 (SFIYIFIFVIGMIANSVVVWV) form a helical membrane-spanning segment. Residues 69–81 (NIQAKTTGYDTHC) lie on the Cytoplasmic side of the membrane. Residues 82 to 102 (YILNLAIADLWVVITIPVWVV) form a helical membrane-spanning segment. The Extracellular portion of the chain corresponds to 103-118 (SLVQHNQWPMGELTCK). The cysteines at positions 117 and 196 are disulfide-linked. Residues 119–139 (ITHLIFSINLFGSIFFLACMS) traverse the membrane as a helical segment. The Cytoplasmic segment spans residues 140 to 162 (VDRYLSITYFTSTSSYKKKMVRR). Residues 163–183 (VVCVLVWLLAFFVSLPDTYYL) form a helical membrane-spanning segment. At 184 to 213 (KTVTSASNNETYCRSFYPEHSIKEWLIGME) the chain is on the extracellular side. A helical transmembrane segment spans residues 214–234 (LVSVILGFAVPFTIIAIFYFL). Over 235-252 (LARAMSASGDQEKHSSRK) the chain is Cytoplasmic. Residues 253 to 273 (IIFSYVVVFLVCWLPYHFVVL) traverse the membrane as a helical segment. Residues 274 to 296 (LDIFSILHYIPFTCQLENVLFTA) lie on the Extracellular side of the membrane. The helical transmembrane segment at 297 to 319 (LHVTQCLSLVHCCVNPVLYSFIN) threads the bilayer. Residues 320–362 (RNYRYELMKAFIFKYSAKTGLTKLIDASRVSETEYSALEQNTK) are Cytoplasmic-facing. The interval 324–362 (YELMKAFIFKYSAKTGLTKLIDASRVSETEYSALEQNTK) is C-terminal cytoplasmic tail. 3 positions are modified to phosphoserine: serine 347, serine 350, and serine 355.

The protein belongs to the G-protein coupled receptor 1 family. Atypical chemokine receptor subfamily. Homodimer. Can form heterodimers with CXCR4; heterodimerization may regulate CXCR4 signaling activity. Interacts with ARRB1 and ARRB2. The Ser/Thr residues in the C-terminal cytoplasmic tail may be phosphorylated. In terms of processing, ubiquitinated at the Lys residues in its C-terminal cytoplasmic tail and is essential for correct trafficking from and to the cell membrane. Deubiquitinated by CXCL12-stimulation in a reversible manner. As to expression, expressed in vascular smooth muscle cells (at protein level). In brain, expressed in blood vessels, pyramidal cells in hippocampal subfield CA3, mature dentate gyrus granule cells, ventricle walls, olfactory bulb, accumbens shell, supraoptic, lateroanterior and ventromedial hypothalamic nuclei, medial region of thalamus, and motor nuclei, central gray and raphe magnus nucleus of brain stem. Detected in primary neurons, GABAergic neurons, astrocytes, cerebral cortex, ventral striatum and choroid plexus. Not detected in mesencephalon.

It is found in the cell membrane. Its subcellular location is the early endosome. It localises to the recycling endosome. Functionally, atypical chemokine receptor that controls chemokine levels and localization via high-affinity chemokine binding that is uncoupled from classic ligand-driven signal transduction cascades, resulting instead in chemokine sequestration, degradation, or transcytosis. Also known as interceptor (internalizing receptor) or chemokine-scavenging receptor or chemokine decoy receptor. Acts as a receptor for chemokines CXCL11 and CXCL12/SDF1. Chemokine binding does not activate G-protein-mediated signal transduction but instead induces beta-arrestin recruitment, leading to ligand internalization and activation of MAPK signaling pathway. Required for regulation of CXCR4 protein levels in migrating interneurons, thereby adapting their chemokine responsiveness. In glioma cells, transduces signals via MEK/ERK pathway, mediating resistance to apoptosis. Promotes cell growth and survival. Not involved in cell migration, adhesion or proliferation of normal hematopoietic progenitors but activated by CXCL11 in malignant hemapoietic cells, leading to phosphorylation of ERK1/2 (MAPK3/MAPK1) and enhanced cell adhesion and migration. Plays a regulatory role in CXCR4-mediated activation of cell surface integrins by CXCL12. Required for heart valve development. In terms of biological role, atypical chemokine receptor that controls chemokine levels and localization via high-affinity chemokine binding that is uncoupled from classic ligand-driven signal transduction cascades, resulting instead in chemokine sequestration, degradation, or transcytosis. Also known as interceptor (internalizing receptor) or chemokine-scavenging receptor or chemokine decoy receptor. Acts as a receptor for chemokines CXCL11 and CXCL12/SDF1. Chemokine binding does not activate G-protein-mediated signal transduction but instead induces beta-arrestin recruitment, leading to ligand internalization and activation of MAPK signaling pathway. Required for regulation of CXCR4 protein levels in migrating interneurons, thereby adapting their chemokine responsiveness. In glioma cells, transduces signals via MEK/ERK pathway, mediating resistance to apoptosis. Promotes cell growth and survival. Not involved in cell migration, adhesion or proliferation of normal hematopoietic progenitors but activated by CXCL11 in malignant hemapoietic cells, leading to phosphorylation of ERK1/2 (MAPK3/MAPK1) and enhanced cell adhesion and migration. Plays a regulatory role in CXCR4-mediated activation of cell surface integrins by CXCL12. Required for heart valve development. Regulates axon guidance in the oculomotor system through the regulation of CXCL12 levels. The chain is Atypical chemokine receptor 3 from Rattus norvegicus (Rat).